The primary structure comprises 299 residues: MSLSVLSRQDKEKVIHRLLIQAPPGEFVNAFDDLCLLIRDEKLMHHQGECAGHQHCQKYCVPLCIDGNPVLLSHHNVMGDFRFFDYQSKLSFRFDLLQNQLRDIQSHGIIRNENEYLRSVVMCALKLYVNDHYPNGNCNVLRKTVKNKEFLIACIEKHSYDNGECWNGLWKSKWIFQVNPFLTQVTGRIFVQAHYFRCVNLHVEVSKDLKESLEVVNQAQLALSFARLVEEQENKFQAAVIEELQELSNEALRKILRRDLPVTRTLIDWQRILSDLNLVMYPKLGYVIYSRSVLCNWII.

Residues serine 2 and serine 290 each carry the phosphoserine modification.

It belongs to the F-actin-capping protein alpha subunit family. As to quaternary structure, component of the F-actin capping complex, composed of a heterodimer of an alpha and a beta subunit. Component of the WASH complex, composed of F-actin-capping protein subunit alpha (CAPZA1, CAPZA2 or CAPZA3), F-actin-capping protein subunit beta (CAPZB), WASHC1, WASHC2, WASHC3, WASHC4 and WASHC5. In terms of tissue distribution, exclusively expressed in the testis.

The protein localises to the cytoplasm. It is found in the cytoskeleton. Its function is as follows. F-actin-capping proteins bind in a Ca(2+)-independent manner to the fast growing ends of actin filaments (barbed end) thereby blocking the exchange of subunits at these ends. Unlike other capping proteins (such as gelsolin and severin), these proteins do not sever actin filaments. May play a role in the morphogenesis of spermatid. The chain is F-actin-capping protein subunit alpha-3 (Capza3) from Rattus norvegicus (Rat).